A 795-amino-acid polypeptide reads, in one-letter code: Phenylalanine--tRNA ligase beta subunit (795 aa).

One can recognise a tRNA-binding domain in the interval 39-148 (AGQFHGVVVG…IDAPLGVDLR (110 aa)). In terms of domain architecture, B5 spans 401–476 (PQSATITLRR…RIYGYNNIPD (76 aa)). Residues D454, D460, E463, and E464 each contribute to the Mg(2+) site. The FDX-ACB domain maps to 701 to 794 (SRFPSNRRDI…LKQRFQASLR (94 aa)).

Belongs to the phenylalanyl-tRNA synthetase beta subunit family. Type 1 subfamily. As to quaternary structure, tetramer of two alpha and two beta subunits. Requires Mg(2+) as cofactor.

The protein resides in the cytoplasm. It carries out the reaction tRNA(Phe) + L-phenylalanine + ATP = L-phenylalanyl-tRNA(Phe) + AMP + diphosphate + H(+). In Photorhabdus laumondii subsp. laumondii (strain DSM 15139 / CIP 105565 / TT01) (Photorhabdus luminescens subsp. laumondii), this protein is Phenylalanine--tRNA ligase beta subunit.